Reading from the N-terminus, the 526-residue chain is Cytochrome P450 52A5 (526 aa).

Residues 18 to 38 traverse the membrane as a helical segment; the sequence is WYVIVPLAIIIYKVFDYFYVL. C473 contributes to the heme binding site.

It belongs to the cytochrome P450 family. Requires heme as cofactor.

The protein localises to the membrane. Together with an NADPH cytochrome P450 the enzyme system catalyzes the terminal hydroxylation as the first step in the assimilation of alkanes and fatty acids. In Candida maltosa (Yeast), this protein is Cytochrome P450 52A5 (CYP52A5).